Reading from the N-terminus, the 313-residue chain is MSRNGRDACRELIGFFFTHDQSLTIYEYRQFGKNRTIVLPFIQKSIYSHQCGRRKGKQYRLGDFYVGATLTFLSSDHASLPESIKENTFLKLRITHIDQIALDSLKTASMDQEDDIVIQETNDRLVFKAIQDVLKEKLHKRGVRILTGLGKYFQQLDKEGNGLLDKADFKQALKVFHLEVSEKDFESAWLILDDNGNGKVDYGEFKRGIIGEMNEYRKSYVRKAFMKLDFNKTGSVPITNIRKCYCAKKHSQVISGHSTEEEIKSSFLETLKVACSKSDEVSYGEFEDYYEGLSIEIIDDEDFVTILRTPWGI.

EF-hand domains follow at residues 144 to 179 (RILTGLGKYFQQLDKEGNGLLDKADFKQALKVFHLE), 180 to 215 (VSEKDFESAWLILDDNGNGKVDYGEFKRGIIGEMNE), and 216 to 251 (YRKSYVRKAFMKLDFNKTGSVPITNIRKCYCAKKHS). Ca(2+)-binding residues include aspartate 193, asparagine 195, asparagine 197, lysine 199, and glutamate 204.

The protein is Calcyphosin-2 (CAPS2) of Macaca fascicularis (Crab-eating macaque).